We begin with the raw amino-acid sequence, 633 residues long: Probable methyltransferase PMT17 (633 aa).

Over 1 to 18 the chain is Cytoplasmic; sequence MAKENSGHHHQTEARRKK. A helical; Signal-anchor for type II membrane protein membrane pass occupies residues 19 to 39; that stretch reads LTLILGVSGLCILFYVLGAWQ. Residues 40–633 are Lumenal-facing; the sequence is ANTVPSSISK…NNNNNNNNNN (594 aa). The disordered stretch occupies residues 50 to 71; the sequence is LGCETQSNPSSSSSSSSSSESA. Residues 59 to 70 are compositionally biased toward low complexity; that stretch reads SSSSSSSSSSES. Asparagine 87 carries an N-linked (GlcNAc...) asparagine glycan.

Belongs to the methyltransferase superfamily.

The protein resides in the endoplasmic reticulum membrane. In Arabidopsis thaliana (Mouse-ear cress), this protein is Probable methyltransferase PMT17.